The sequence spans 96 residues: Large ribosomal subunit protein uL23 (96 aa).

This sequence belongs to the universal ribosomal protein uL23 family. Part of the 50S ribosomal subunit. Contacts protein L29, and trigger factor when it is bound to the ribosome.

In terms of biological role, one of the early assembly proteins it binds 23S rRNA. One of the proteins that surrounds the polypeptide exit tunnel on the outside of the ribosome. Forms the main docking site for trigger factor binding to the ribosome. This is Large ribosomal subunit protein uL23 from Enterococcus faecalis (strain ATCC 700802 / V583).